The sequence spans 151 residues: Probable cellulase Cel12b (151 aa).

Residues glutamate 50 and glutamate 133 contribute to the active site.

This sequence belongs to the glycosyl hydrolase 12 (cellulase H) family.

Probable cellulase. Can hydrolyze barley beta-glucan in vitro. Could be important for the survival of M.tuberculosis in the environment, perhaps in amoebal hosts. This chain is Probable cellulase Cel12b, found in Mycobacterium tuberculosis (strain ATCC 25618 / H37Rv).